A 264-amino-acid chain; its full sequence is MIEVSGVSVRLSGKTIISDVAFTAKAGELTAIAGPNGSGKTTTMKAISGELAYGGSVRIGGDEVKGLKPWQLAAIRGVLPQASTISFPFTVREIVRMGLTSGLNLHPDKAEQTAAAALASVDLTGFEGRFYQELSGGEQQRVQLARVLCQIAEPVVDGKPCWLLLDEPVSSLDISHQLTIMTLARNFCERGGGVIAVMHDLNLTALFADRIVLMKSGRLAAPAASFEVLTDETMLSVFGLRVRINQVPADGTPFVLAHSAVSRP.

The 240-residue stretch at 2-241 (IEVSGVSVRL…ETMLSVFGLR (240 aa)) folds into the ABC transporter domain. 34–41 (GPNGSGKT) provides a ligand contact to ATP.

This sequence belongs to the ABC transporter superfamily. Heme (hemin) importer (TC 3.A.1.14.5) family. The complex is composed of two ATP-binding proteins (HmuV), two transmembrane proteins (HmuU) and a solute-binding protein (HmuT).

It is found in the cell inner membrane. Part of the ABC transporter complex HmuTUV involved in hemin import. Responsible for energy coupling to the transport system. The sequence is that of Hemin import ATP-binding protein HmuV from Rhizobium leguminosarum.